We begin with the raw amino-acid sequence, 593 residues long: ETS-related transcription factor Elf-2 (593 aa).

A Phosphoserine modification is found at S107. Residues 146–201 (VEVSTEESEPMDTSPIPTSPDSHEPMKKKKVGRKPKTQQSPISNGSPELGIKKKPR) form a disordered region. Over residues 171 to 181 (MKKKKVGRKPK) the composition is skewed to basic residues. T182 is modified (phosphothreonine). Polar residues predominate over residues 182–191 (TQQSPISNGS). Residues S185 and S191 each carry the phosphoserine modification. The ETS DNA-binding region spans 208–290 (TYLWEFLLDL…EGQRLVYQFK (83 aa)). 2 positions are modified to phosphoserine: S363 and S372. At T376 the chain carries Phosphothreonine. S430 carries the post-translational modification Phosphoserine. An Omega-N-methylarginine modification is found at R494. T521 carries the phosphothreonine modification. K536 participates in a covalent cross-link: Glycyl lysine isopeptide (Lys-Gly) (interchain with G-Cter in SUMO2).

This sequence belongs to the ETS family. Interacts with the LIM domains of LMO2. Interacts via its N-terminal region with RUNX1. In terms of tissue distribution, expressed in all fetal and adult tissues examined. Among fetal tissues, highest levels of expression detected in heart, lung, liver and kidney, and lower levels in brain. Among adult tissues, highest levels of expression detected in heart, placenta, lung, skeletal muscle, spleen, thymus, testis and ovary. Moderate expression in prostate, small intestine, kidney, liver and pancreas, and weak expression in colon, brain and peripheral blood lymphocytes.

The protein localises to the nucleus. Isoform 1 transcriptionally activates the LYN and BLK promoters and acts synergistically with RUNX1 to transactivate the BLK promoter. Its function is as follows. Isoform 2 may function in repression of RUNX1-mediated transactivation. This Homo sapiens (Human) protein is ETS-related transcription factor Elf-2.